Reading from the N-terminus, the 245-residue chain is OCIA domain-containing protein 1 (245 aa).

The region spanning 1-112 is the OCIA domain; the sequence is MNGRADFREP…KKLENSPLGE (112 aa). A phosphoserine mark is found at Ser-108, Ser-116, Ser-123, and Ser-191. Disordered regions lie at residues 111–141 and 169–245; these read GEAL…VSGQ and NESA…TWDE. Basic and acidic residues-rich tracts occupy residues 190 to 210 and 224 to 238; these read ESPK…RESY and PMHE…KVNK.

Belongs to the OCIAD1 family. Interacts with OCIAD2. Interacts with STAT3. Isoform 1 is highly expressed in many tissues, including testis, brain, placenta, ovary, prostate and mammary gland. Isoform 2 expression is restricted to the central nervous system including brain, cerebellum and spinal cord.

The protein localises to the endosome. Maintains stem cell potency. Increases STAT3 phosphorylation and controls ERK phosphorylation. May act as a scaffold, increasing STAT3 recruitment onto endosomes. Involved in integrin-mediated cancer cell adhesion and colony formation in ovarian cancer. This is OCIA domain-containing protein 1 from Homo sapiens (Human).